Reading from the N-terminus, the 81-residue chain is Cytotoxin 3d (81 aa).

The N-terminal stretch at 1–21 (MKTLLLTLVVVTIVCLDLGYT) is a signal peptide. 4 disulfides stabilise this stretch: Cys24–Cys42, Cys35–Cys59, Cys63–Cys74, and Cys75–Cys80.

It belongs to the three-finger toxin family. Short-chain subfamily. Type IA cytotoxin sub-subfamily. Monomer in solution; Homodimer and oligomer in the presence of negatively charged lipids forming a pore with a size ranging between 20 and 30 Angstroms. In terms of tissue distribution, expressed by the venom gland.

It is found in the secreted. The protein localises to the target cell membrane. Shows cytolytic activity on many different cells by forming pore in lipid membranes. In vivo, increases heart rate or kills the animal by cardiac arrest. In addition, it binds to heparin with high affinity, interacts with Kv channel-interacting protein 1 (KCNIP1) in a calcium-independent manner, and binds to integrin alpha-V/beta-3 (ITGAV/ITGB3) with moderate affinity. The sequence is that of Cytotoxin 3d from Naja atra (Chinese cobra).